Consider the following 278-residue polypeptide: Ribosomal RNA small subunit methyltransferase A (278 aa).

S-adenosyl-L-methionine is bound by residues Asn-28, Leu-30, Gly-55, Glu-77, Asp-103, and Asn-122.

This sequence belongs to the class I-like SAM-binding methyltransferase superfamily. rRNA adenine N(6)-methyltransferase family. RsmA subfamily.

It is found in the cytoplasm. The catalysed reaction is adenosine(1518)/adenosine(1519) in 16S rRNA + 4 S-adenosyl-L-methionine = N(6)-dimethyladenosine(1518)/N(6)-dimethyladenosine(1519) in 16S rRNA + 4 S-adenosyl-L-homocysteine + 4 H(+). Its function is as follows. Specifically dimethylates two adjacent adenosines (A1518 and A1519) in the loop of a conserved hairpin near the 3'-end of 16S rRNA in the 30S particle. May play a critical role in biogenesis of 30S subunits. The polypeptide is Ribosomal RNA small subunit methyltransferase A (Cereibacter sphaeroides (strain ATCC 17023 / DSM 158 / JCM 6121 / CCUG 31486 / LMG 2827 / NBRC 12203 / NCIMB 8253 / ATH 2.4.1.) (Rhodobacter sphaeroides)).